Consider the following 446-residue polypeptide: Chromosomal replication initiator protein DnaA (446 aa).

The segment at 1 to 81 (MENISDLWNS…AKLAIRFIIP (81 aa)) is domain I, interacts with DnaA modulators. A domain II region spans residues 81–109 (PQSQAEEDIDLPPVKPNPAQDDSAHLPQS). The domain III, AAA+ region stretch occupies residues 110–326 (MLNPKYTFDT…GALIRVVAYS (217 aa)). 4 residues coordinate ATP: Gly154, Gly156, Lys157, and Thr158. The tract at residues 327–446 (SLINKDINAD…QVEEINGILK (120 aa)) is domain IV, binds dsDNA.

This sequence belongs to the DnaA family. Oligomerizes as a right-handed, spiral filament on DNA at oriC.

It is found in the cytoplasm. Plays an essential role in the initiation and regulation of chromosomal replication. ATP-DnaA binds to the origin of replication (oriC) to initiate formation of the DNA replication initiation complex once per cell cycle. Binds the DnaA box (a 9 base pair repeat at the origin) and separates the double-stranded (ds)DNA. Forms a right-handed helical filament on oriC DNA; dsDNA binds to the exterior of the filament while single-stranded (ss)DNA is stabiized in the filament's interior. The ATP-DnaA-oriC complex binds and stabilizes one strand of the AT-rich DNA unwinding element (DUE), permitting loading of DNA polymerase. After initiation quickly degrades to an ADP-DnaA complex that is not apt for DNA replication. Binds acidic phospholipids. This is Chromosomal replication initiator protein DnaA from Bacillus cereus (strain B4264).